The primary structure comprises 509 residues: Lanosterol 14-alpha demethylase (509 aa).

A helical transmembrane segment spans residues 30-50 (GNLLSMLLIACAFTLSLVYLF). Position 455 (Cys-455) interacts with heme.

It belongs to the cytochrome P450 family. Heme serves as cofactor. Post-translationally, ubiquitinated by MARCHF6, leading to proteasomal degradation.

It localises to the endoplasmic reticulum membrane. Its subcellular location is the microsome membrane. The enzyme catalyses a 14alpha-methyl steroid + 3 reduced [NADPH--hemoprotein reductase] + 3 O2 = a Delta(14) steroid + formate + 3 oxidized [NADPH--hemoprotein reductase] + 4 H2O + 4 H(+). It catalyses the reaction lanosterol + 3 reduced [NADPH--hemoprotein reductase] + 3 O2 = 4,4-dimethyl-5alpha-cholesta-8,14,24-trien-3beta-ol + formate + 3 oxidized [NADPH--hemoprotein reductase] + 4 H2O + 4 H(+). It carries out the reaction 24,25-dihydrolanosterol + 3 reduced [NADPH--hemoprotein reductase] + 3 O2 = 4,4-dimethyl-8,14-cholestadien-3beta-ol + formate + 3 oxidized [NADPH--hemoprotein reductase] + 4 H2O + 4 H(+). The catalysed reaction is a 14alpha-methyl steroid + reduced [NADPH--hemoprotein reductase] + O2 = a 14alpha-hydroxymethyl steroid + oxidized [NADPH--hemoprotein reductase] + H2O + H(+). The enzyme catalyses a 14alpha-hydroxymethyl steroid + reduced [NADPH--hemoprotein reductase] + O2 = a 14alpha-formyl steroid + oxidized [NADPH--hemoprotein reductase] + 2 H2O + H(+). It catalyses the reaction a 14alpha-formyl steroid + reduced [NADPH--hemoprotein reductase] + O2 = a Delta(14) steroid + formate + oxidized [NADPH--hemoprotein reductase] + H2O + 2 H(+). It carries out the reaction lanosterol + reduced [NADPH--hemoprotein reductase] + O2 = 32-hydroxylanosterol + oxidized [NADPH--hemoprotein reductase] + H2O + H(+). The catalysed reaction is 32-hydroxylanosterol + reduced [NADPH--hemoprotein reductase] + O2 = 32-oxolanosterol + oxidized [NADPH--hemoprotein reductase] + 2 H2O + H(+). The enzyme catalyses 32-oxolanosterol + reduced [NADPH--hemoprotein reductase] + O2 = 4,4-dimethyl-5alpha-cholesta-8,14,24-trien-3beta-ol + formate + oxidized [NADPH--hemoprotein reductase] + H2O + 2 H(+). It catalyses the reaction 24,25-dihydrolanosterol + reduced [NADPH--hemoprotein reductase] + O2 = 32-hydroxy-24,25-dihydrolanosterol + oxidized [NADPH--hemoprotein reductase] + H2O + H(+). It carries out the reaction 32-hydroxy-24,25-dihydrolanosterol + reduced [NADPH--hemoprotein reductase] + O2 = 32-oxo-24,25-dihydrolanosterol + oxidized [NADPH--hemoprotein reductase] + 2 H2O + H(+). The catalysed reaction is 32-oxo-24,25-dihydrolanosterol + reduced [NADPH--hemoprotein reductase] + O2 = 4,4-dimethyl-8,14-cholestadien-3beta-ol + formate + oxidized [NADPH--hemoprotein reductase] + H2O + 2 H(+). It participates in steroid biosynthesis; zymosterol biosynthesis; zymosterol from lanosterol: step 1/6. Inhibited by azalanstat. Inhibited by azole antifungal agents ketoconazole, itraconazole and fluconazole. Functionally, sterol 14alpha-demethylase that plays a critical role in the cholesterol biosynthesis pathway, being cholesterol the major sterol component in mammalian membranes as well as a precursor for bile acid and steroid hormone synthesis. Cytochrome P450 monooxygenase that catalyzes the three-step oxidative removal of the 14alpha-methyl group (C-32) of sterols such as lanosterol (lanosta-8,24-dien-3beta-ol) and 24,25-dihydrolanosterol (DHL) in the form of formate, and converts the sterols to 4,4-dimethyl-5alpha-cholesta-8,14,24-trien-3beta-ol and 4,4-dimethyl-8,14-cholestadien-3beta-ol, respectively, which are intermediates of cholesterol biosynthesis. Can also demethylate substrates not intrinsic to mammals, such as eburicol (24-methylene-24,25-dihydrolanosterol), but at a lower rate than DHL. The chain is Lanosterol 14-alpha demethylase from Macaca fascicularis (Crab-eating macaque).